A 491-amino-acid polypeptide reads, in one-letter code: UDP-N-acetylmuramate--L-alanine ligase (491 aa).

126-132 (GTHGKTT) contacts ATP.

The protein belongs to the MurCDEF family.

It is found in the cytoplasm. The catalysed reaction is UDP-N-acetyl-alpha-D-muramate + L-alanine + ATP = UDP-N-acetyl-alpha-D-muramoyl-L-alanine + ADP + phosphate + H(+). It functions in the pathway cell wall biogenesis; peptidoglycan biosynthesis. In terms of biological role, cell wall formation. In Salmonella typhimurium (strain LT2 / SGSC1412 / ATCC 700720), this protein is UDP-N-acetylmuramate--L-alanine ligase.